A 427-amino-acid chain; its full sequence is Enolase (427 aa).

Glutamine 163 serves as a coordination point for (2R)-2-phosphoglycerate. The active-site Proton donor is glutamate 205. The Mg(2+) site is built by aspartate 242, glutamate 285, and aspartate 312. (2R)-2-phosphoglycerate is bound by residues lysine 337, arginine 366, serine 367, and lysine 388. Lysine 337 acts as the Proton acceptor in catalysis.

It belongs to the enolase family. Mg(2+) is required as a cofactor.

It is found in the cytoplasm. It localises to the secreted. Its subcellular location is the cell surface. The catalysed reaction is (2R)-2-phosphoglycerate = phosphoenolpyruvate + H2O. Its pathway is carbohydrate degradation; glycolysis; pyruvate from D-glyceraldehyde 3-phosphate: step 4/5. Its function is as follows. Catalyzes the reversible conversion of 2-phosphoglycerate (2-PG) into phosphoenolpyruvate (PEP). It is essential for the degradation of carbohydrates via glycolysis. The chain is Enolase from Paraburkholderia xenovorans (strain LB400).